The sequence spans 89 residues: MAKKSVIARNEKRKALVEKYAAKRDQLKKAGDYEALSKLPRDSASCRVRTRCVLTGRGRGVYEKFGLCRQMFRKLALEGKLPGIKKASW.

The protein belongs to the universal ribosomal protein uS14 family. In terms of assembly, part of the 30S ribosomal subunit. Contacts proteins S3 and S10.

Its function is as follows. Binds 16S rRNA, required for the assembly of 30S particles and may also be responsible for determining the conformation of the 16S rRNA at the A site. The polypeptide is Small ribosomal subunit protein uS14 (Chlorobium phaeobacteroides (strain BS1)).